The following is a 104-amino-acid chain: Large ribosomal subunit protein uL24 (104 aa).

The protein belongs to the universal ribosomal protein uL24 family. Part of the 50S ribosomal subunit.

One of two assembly initiator proteins, it binds directly to the 5'-end of the 23S rRNA, where it nucleates assembly of the 50S subunit. Its function is as follows. One of the proteins that surrounds the polypeptide exit tunnel on the outside of the subunit. The chain is Large ribosomal subunit protein uL24 from Salmonella paratyphi A (strain ATCC 9150 / SARB42).